The sequence spans 314 residues: Cyclin-dependent kinase 2 (314 aa).

The Protein kinase domain occupies 8 to 287 (FQRAEKIGEG…AKDALQHAYF (280 aa)). Residues 14-22 (IGEGTYGIV) and Lys-37 each bind ATP. Position 18 is a phosphothreonine (Thr-18). Residue Tyr-19 is modified to Phosphotyrosine. Residue Asp-130 is the Proton acceptor of the active site. Position 162 is a phosphotyrosine (Tyr-162). Thr-163 is modified (phosphothreonine).

This sequence belongs to the protein kinase superfamily. CMGC Ser/Thr protein kinase family. CDC2/CDKX subfamily. As to quaternary structure, interacts with cyclin CycG.

It carries out the reaction L-seryl-[protein] + ATP = O-phospho-L-seryl-[protein] + ADP + H(+). It catalyses the reaction L-threonyl-[protein] + ATP = O-phospho-L-threonyl-[protein] + ADP + H(+). The enzyme catalyses [DNA-directed RNA polymerase] + ATP = phospho-[DNA-directed RNA polymerase] + ADP + H(+). Like Cdk1, could play a key role in the control of the eukaryotic cell cycle. The sequence is that of Cyclin-dependent kinase 2 from Drosophila melanogaster (Fruit fly).